We begin with the raw amino-acid sequence, 120 residues long: UPF0102 protein CbuK_0265 (120 aa).

It belongs to the UPF0102 family.

This chain is UPF0102 protein CbuK_0265, found in Coxiella burnetii (strain CbuK_Q154) (Coxiella burnetii (strain Q154)).